Here is a 79-residue protein sequence, read N- to C-terminus: Gas vesicle protein A2 (79 aa).

Positions 9-19 (LAEVLDRVLDK) are alpha helix 1. The beta-strand 1 stretch occupies residues 23-31 (VDVWARISL). A beta turn region spans residues 32-34 (VGI). The segment at 35-43 (EILTVEARV) is beta-strand 2. The interval 48–67 (VDTFLHYAEEIAKIEQAELT) is alpha helix 2.

The protein belongs to the gas vesicle GvpA family. The gas vesicle shell is 2 nm thick and consists of a single layer of this protein. It forms helical ribs nearly perpendicular to the long axis of the vesicle.

The protein localises to the gas vesicle shell. In terms of biological role, gas vesicles are hollow, gas filled proteinaceous nanostructures found in several microbial planktonic microorganisms. They allow positioning of halobacteria at the optimal depth for growth in the poorly aerated shallow brine pools of their habitat. GvpA forms the gas vesicle shell. This protein can replace the p-gvpA gene in the p-vac locus and increases the critical collapse pressure (CCP) of hybrid gas vesicles from 0.66 MPa to 0.90 MPa. In stationary phase gas vesicles about 30 times more GvpA1 is found than GvpA2. Its function is as follows. Expression of 2 c-vac DNA fragments containing 2 divergently transcribed regions (gvpE-gvpF-gvpG-gvpH-gvpI-gvpJ-gvpK-gvpL-gvpM and gvpA-gvpC-gvpN-gvpO) allows H.volcanii to produce gas vesicles. All site-directed mutagenesis is tested in H.volcanii. In Halobacterium salinarum (strain ATCC 700922 / JCM 11081 / NRC-1) (Halobacterium halobium), this protein is Gas vesicle protein A2.